The primary structure comprises 339 residues: Protein LicA (339 aa).

Repeat copies occupy residues 4–7 (INQS), 8–11 (INQS), 12–15 (INQS), 16–19 (INQS), 20–23 (INQS), 24–27 (INQS), 28–31 (INQS), 32–35 (INQS), and 36–39 (INQS). Positions 4–39 (INQSINQSINQSINQSINQSINQSINQSINQSINQS) are 9 X 4 AA tandem repeats of I-N-Q-S.

It belongs to the peptidase S49 family.

Functionally, mediates phase variation of the LOS 6A2 and 12D9 epitopes. Phase variation of H.influenza LOS epitopes expressed by LicA is determined by a translational switch. This Haemophilus influenzae protein is Protein LicA (licA).